Here is a 197-residue protein sequence, read N- to C-terminus: Probable GTP-binding protein EngB (197 aa).

The region spanning 25–197 is the EngB-type G domain; sequence SAPEIAFAGR…VRDEFFKFTR (173 aa). Residues 33 to 40, 60 to 64, 79 to 82, 146 to 149, and 177 to 179 each bind GTP; these read GRSNVGKS, GCTRQ, DLPG, TKID, and ISV. Mg(2+) is bound by residues Ser40 and Thr62.

Belongs to the TRAFAC class TrmE-Era-EngA-EngB-Septin-like GTPase superfamily. EngB GTPase family. Mg(2+) is required as a cofactor.

Functionally, necessary for normal cell division and for the maintenance of normal septation. The polypeptide is Probable GTP-binding protein EngB (Wolbachia sp. subsp. Brugia malayi (strain TRS)).